The sequence spans 139 residues: MLIPRKVKHRKQHHPKRSGVAKGGTRVVFGEYGIQALEPAYVTNRQIESARIAMTRHIRRGGKVWITIFPDRPLTKKPAETRMGSGKGSPEWWVANVKPGRVMFELAGVPEPVAREALRRAMHKLPMKCRFVRREVEVS.

Over residues 1 to 19 (MLIPRKVKHRKQHHPKRSG) the composition is skewed to basic residues. A disordered region spans residues 1–22 (MLIPRKVKHRKQHHPKRSGVAK).

It belongs to the universal ribosomal protein uL16 family. As to quaternary structure, part of the 50S ribosomal subunit.

Its function is as follows. Binds 23S rRNA and is also seen to make contacts with the A and possibly P site tRNAs. The protein is Large ribosomal subunit protein uL16 of Acidothermus cellulolyticus (strain ATCC 43068 / DSM 8971 / 11B).